The following is a 92-amino-acid chain: Dynein light chain 1, cytoplasmic (92 aa).

Belongs to the dynein light chain family. Homodimer. Cytoplasmic dynein consists of two catalytic heavy chains (HCs) and a number of non-catalytic subunits which present intermediate chains (ICs), light intermediate chains (LICs) and light chains (LCs). Component of the nuclear pore complex (NPC). NPC constitutes the exclusive means of nucleocytoplasmic transport. NPCs allow the passive diffusion of ions and small molecules and the active, nuclear transport receptor-mediated bidirectional transport of macromolecules such as proteins, RNAs, ribonucleoparticles (RNPs), and ribosomal subunits across the nuclear envelope. Due to its 8-fold rotational symmetry, all subunits are present with 8 copies or multiples thereof. Part of the NUP82 subcomplex. In the complex, interacts directly with Nup159.

It is found in the cytoplasm. The protein resides in the cytoskeleton. The protein localises to the nucleus. Its subcellular location is the nuclear pore complex. Functionally, acts as one of several non-catalytic accessory components of the cytoplasmic dynein complex that are thought to be involved in linking dynein to cargos and to adapter proteins that regulate dynein function. Cytoplasmic dynein 1 acts as a motor for the intracellular retrograde motility of vesicles and organelles along microtubules. May play a role in changing or maintaining the spatial distribution of cytoskeletal structures. Also a component of the nuclear pore complex where it may contribute to the stable association of the Nup82 subcomplex with the NPC. This is Dynein light chain 1, cytoplasmic (DYN2) from Saccharomyces cerevisiae (strain ATCC 204508 / S288c) (Baker's yeast).